Here is a 257-residue protein sequence, read N- to C-terminus: 3-methyl-2-oxobutanoate hydroxymethyltransferase (257 aa).

2 residues coordinate Mg(2+): Asp42 and Asp86. 3-methyl-2-oxobutanoate is bound by residues 42–43 (DS), Asp86, and Lys116. Glu118 is a binding site for Mg(2+). Glu185 functions as the Proton acceptor in the catalytic mechanism.

The protein belongs to the PanB family. As to quaternary structure, homodecamer; pentamer of dimers. It depends on Mg(2+) as a cofactor.

Its subcellular location is the cytoplasm. The enzyme catalyses 3-methyl-2-oxobutanoate + (6R)-5,10-methylene-5,6,7,8-tetrahydrofolate + H2O = 2-dehydropantoate + (6S)-5,6,7,8-tetrahydrofolate. It functions in the pathway cofactor biosynthesis; (R)-pantothenate biosynthesis; (R)-pantoate from 3-methyl-2-oxobutanoate: step 1/2. Catalyzes the reversible reaction in which hydroxymethyl group from 5,10-methylenetetrahydrofolate is transferred onto alpha-ketoisovalerate to form ketopantoate. In Prochlorococcus marinus (strain MIT 9312), this protein is 3-methyl-2-oxobutanoate hydroxymethyltransferase.